The chain runs to 555 residues: Solute carrier family 22 member 2 (555 aa).

At 1-21 (MSTVDDILEHIGEFHLFQKQT) the chain is on the cytoplasmic side. A helical membrane pass occupies residues 22–42 (FFLLALLSGAFTPIYVGIVFL). Residues 43-150 (GFTPDHHCWS…LVCAHSWMLD (108 aa)) lie on the Extracellular side of the membrane. Asparagine 71 is a glycosylation site (N-linked (GlcNAc...) asparagine). A helical transmembrane segment spans residues 151-171 (LFQSVVNVGFFIGAMMIGYLA). The Cytoplasmic segment spans residues 172–177 (DRFGRK). A helical membrane pass occupies residues 178–198 (FCLLVTILINAISGALMAISP). Over 199 to 210 (NYAWMLVFRFLQ) the chain is Extracellular. The helical transmembrane segment at 211 to 231 (GLVSKAGWLIGYILITEFVGL) threads the bilayer. Topologically, residues 232-238 (GYRRMVG) are cytoplasmic. The chain crosses the membrane as a helical span at residues 239–259 (ICYQIAFTVGLLILAGVAYVI). Topologically, residues 260 to 263 (PNWR) are extracellular. The chain crosses the membrane as a helical span at residues 264-284 (WLQFAVTLPNFCFLLYFWCIP). The Proline-rich sequence motif lies at 284-288 (PESPR). Residues 285-348 (ESPRWLISQN…VRTPQIRKHT (64 aa)) lie on the Cytoplasmic side of the membrane. Residues 349 to 369 (LILMYNWFTSSVLYQGLIMHM) form a helical membrane-spanning segment. Residues 370–375 (GLAGDN) are Extracellular-facing. Residues 376–396 (IYLDFFYSALVEFPAAFIIIL) form a helical membrane-spanning segment. The Cytoplasmic segment spans residues 397-404 (TIDRVGRR). A helical transmembrane segment spans residues 405–425 (YPWAVSNMVAGAACLASVFIP). The Extracellular segment spans residues 426–432 (DDLQWLK). A helical transmembrane segment spans residues 433–453 (ITIACLGRMGITMAYEMVCLV). Topologically, residues 454–464 (NAELYPTYIRN) are cytoplasmic. The helical transmembrane segment at 465–485 (LGVLVCSSMCDIGGIITPFLV) threads the bilayer. At 486-494 (YRLTDIWME) the chain is on the extracellular side. Residues 495–515 (FPLVVFAVVGLVAGALVLLLP) traverse the membrane as a helical segment. The Cytoplasmic segment spans residues 516–555 (ETKGKALPETIEDAENMQRPRKKKEKRIYLQVKQADRPLS).

This sequence belongs to the major facilitator (TC 2.A.1) superfamily. Organic cation transporter (TC 2.A.1.19) family. Post-translationally, tyrosine phosphorylated. As to expression, expressed in the kidney, in the proximal tubules of cortex and of the outer medulla. In brain, highly expressed predominantly in regions located at the brain-cerebrospinal fluid border, in the leptomeninges, in the choroid plexus and in a layer boarding the third ventricle. In brain, also observed in the granular cell layer of the cerebellum and in the granular layer and pyramidal cells of the hippocampus in the CA1-CA3 regions. Expressed in tracheal and bronchial ciliated epithelium in the respiratory tract. Expression is greater in the kidney of male than of female.

The protein localises to the basolateral cell membrane. The protein resides in the basal cell membrane. Its subcellular location is the apical cell membrane. The catalysed reaction is (R)-noradrenaline(out) = (R)-noradrenaline(in). It carries out the reaction (R)-adrenaline(out) = (R)-adrenaline(in). The enzyme catalyses serotonin(out) = serotonin(in). It catalyses the reaction dopamine(out) = dopamine(in). The catalysed reaction is histamine(out) = histamine(in). It carries out the reaction thiamine(in) = thiamine(out). The enzyme catalyses creatinine(in) = creatinine(out). It catalyses the reaction 1-methylnicotinamide(out) = 1-methylnicotinamide(in). The catalysed reaction is guanidine(out) = guanidine(in). It carries out the reaction choline(out) = choline(in). The enzyme catalyses agmatine(out) = agmatine(in). It catalyses the reaction putrescine(out) = putrescine(in). The catalysed reaction is spermidine(in) = spermidine(out). It carries out the reaction tyramine(in) = tyramine(out). The enzyme catalyses L-histidyl-L-proline diketopiperazine(in) = L-histidyl-L-proline diketopiperazine(out). It catalyses the reaction (R)-salsolinol(in) = (R)-salsolinol(out). The catalysed reaction is N-methyl-(R)-salsolinol(in) = N-methyl-(R)-salsolinol(out). It carries out the reaction acetylcholine(in) = acetylcholine(out). The enzyme catalyses prostaglandin F2alpha(out) = prostaglandin F2alpha(in). It catalyses the reaction prostaglandin E2(out) = prostaglandin E2(in). Its activity is regulated as follows. Tyrosine phosphorylation of the transporter leads to activation of the transport activity. Inhibited by cGMP, most likely through a cGMP-binding protein that interacts with OCT2. Its function is as follows. Electrogenic voltage-dependent transporter that mediates the transport of a variety of organic cations such as endogenous bioactive amines, cationic drugs and xenobiotics. Functions as a Na(+)-independent, bidirectional uniporter. Cation cellular uptake or release is driven by the electrochemical potential, i.e. membrane potential and concentration gradient. However, may also engage electroneutral cation exchange when saturating concentrations of cation substrates are reached. Predominantly expressed at the basolateral membrane of hepatocytes and proximal tubules and involved in the uptake and disposition of cationic compounds by hepatic and renal clearance from the blood flow. Implicated in monoamine neurotransmitters uptake such as histamine, dopamine, adrenaline/epinephrine, noradrenaline/norepinephrine, serotonin and tyramine, thereby supporting a physiological role in the central nervous system by regulating interstitial concentrations of neurotransmitters. Also capable of transporting dopaminergic neuromodulators cyclo(his-pro), salsolinol and N-methyl-salsolinol, thereby involved in the maintenance of dopaminergic cell integrity in the central nervous system. Mediates the bidirectional transport of acetylcholine (ACh) at the apical membrane of ciliated cell in airway epithelium, thereby playing a role in luminal release of ACh from bronchial epithelium. Also transports guanidine and endogenous monoamines such as vitamin B1/thiamine, creatinine and N-1-methylnicotinamide (NMN). Mediates the uptake and efflux of quaternary ammonium compound choline. Mediates the bidirectional transport of polyamine agmatine and the uptake of polyamine putrescine. Able to transport non-amine endogenous compounds such as prostaglandin E2 (PGE2) and prostaglandin F2-alpha (PGF2-alpha). Also involved in the uptake of xenobiotic 4-(4-(dimethylamino)styryl)-N-methylpyridinium (ASP). May contribute to regulate the transport of organic compounds in testis across the blood-testis-barrier. In Rattus norvegicus (Rat), this protein is Solute carrier family 22 member 2.